Reading from the N-terminus, the 340-residue chain is Protein phosphatase PTC7 homolog fig (340 aa).

Residues 58–314 (RAQAETIQAP…DDITVVLASV (257 aa)) enclose the PPM-type phosphatase domain. Mn(2+)-binding residues include Asp90, Gly91, and Asp236.

Belongs to the PP2C family. The cofactor is Mg(2+). Mn(2+) is required as a cofactor.

It catalyses the reaction O-phospho-L-seryl-[protein] + H2O = L-seryl-[protein] + phosphate. It carries out the reaction O-phospho-L-threonyl-[protein] + H2O = L-threonyl-[protein] + phosphate. In Drosophila pseudoobscura pseudoobscura (Fruit fly), this protein is Protein phosphatase PTC7 homolog fig.